The following is a 312-amino-acid chain: Methionyl-tRNA formyltransferase (312 aa).

107-110 (SLLP) contacts (6S)-5,6,7,8-tetrahydrofolate.

This sequence belongs to the Fmt family.

It carries out the reaction L-methionyl-tRNA(fMet) + (6R)-10-formyltetrahydrofolate = N-formyl-L-methionyl-tRNA(fMet) + (6S)-5,6,7,8-tetrahydrofolate + H(+). Its function is as follows. Attaches a formyl group to the free amino group of methionyl-tRNA(fMet). The formyl group appears to play a dual role in the initiator identity of N-formylmethionyl-tRNA by promoting its recognition by IF2 and preventing the misappropriation of this tRNA by the elongation apparatus. This chain is Methionyl-tRNA formyltransferase, found in Borreliella burgdorferi (strain ZS7) (Borrelia burgdorferi).